A 312-amino-acid polypeptide reads, in one-letter code: Sulfate adenylyltransferase subunit 2 (312 aa).

The protein belongs to the PAPS reductase family. CysD subfamily. In terms of assembly, heterodimer composed of CysD, the smaller subunit, and CysN.

It carries out the reaction sulfate + ATP + H(+) = adenosine 5'-phosphosulfate + diphosphate. The protein operates within sulfur metabolism; hydrogen sulfide biosynthesis; sulfite from sulfate: step 1/3. Its function is as follows. With CysN forms the ATP sulfurylase (ATPS) that catalyzes the adenylation of sulfate producing adenosine 5'-phosphosulfate (APS) and diphosphate, the first enzymatic step in sulfur assimilation pathway. APS synthesis involves the formation of a high-energy phosphoric-sulfuric acid anhydride bond driven by GTP hydrolysis by CysN coupled to ATP hydrolysis by CysD. This chain is Sulfate adenylyltransferase subunit 2, found in Methylobacterium nodulans (strain LMG 21967 / CNCM I-2342 / ORS 2060).